The sequence spans 217 residues: MRVRNRKGAGEMLAENAHIVVENPADFKGSWSERFGNDHPIHIEVGCGKGAFITGMAALHPEINYIAIDMQLSVLSYALDKAIEADLPNVQMMLVDGAALSEYFADGEIDQVYLNFSDPWPKGRHEKRRLTYKSFLATYEKILRPEGEIHFKTDNRGLFEYSLVSLANYGMELKKVWLDLHQDEEFAPQNVMTEYEQKFSQKGQVIYRLEAKFLPKK.

Positions 44, 69, 96, and 118 each coordinate S-adenosyl-L-methionine. D118 is a catalytic residue. A substrate-binding site is contributed by K122. An interaction with RNA region spans residues 124 to 129 (RHEKRR). Substrate is bound by residues D154 and 193–196 (TEYE).

It belongs to the class I-like SAM-binding methyltransferase superfamily. TrmB family.

It carries out the reaction guanosine(46) in tRNA + S-adenosyl-L-methionine = N(7)-methylguanosine(46) in tRNA + S-adenosyl-L-homocysteine. Its pathway is tRNA modification; N(7)-methylguanine-tRNA biosynthesis. Its function is as follows. Catalyzes the formation of N(7)-methylguanine at position 46 (m7G46) in tRNA. This chain is tRNA (guanine-N(7)-)-methyltransferase, found in Lactococcus lactis subsp. cremoris (strain SK11).